A 435-amino-acid polypeptide reads, in one-letter code: ATP-dependent protease ATPase subunit HslU (435 aa).

ATP is bound by residues I18, G60–E65, D248, E313, and R385.

Belongs to the ClpX chaperone family. HslU subfamily. In terms of assembly, a double ring-shaped homohexamer of HslV is capped on each side by a ring-shaped HslU homohexamer. The assembly of the HslU/HslV complex is dependent on binding of ATP.

The protein resides in the cytoplasm. In terms of biological role, ATPase subunit of a proteasome-like degradation complex; this subunit has chaperone activity. The binding of ATP and its subsequent hydrolysis by HslU are essential for unfolding of protein substrates subsequently hydrolyzed by HslV. HslU recognizes the N-terminal part of its protein substrates and unfolds these before they are guided to HslV for hydrolysis. The chain is ATP-dependent protease ATPase subunit HslU from Rhizobium meliloti (strain 1021) (Ensifer meliloti).